The following is a 298-amino-acid chain: Protein REVEILLE 8 (298 aa).

Residues 1 to 44 are disordered; it reads MSSSPSRNPTNAEAPPPPPTSTDAVAEGSSKKVRKPYTITKSRE. In terms of domain architecture, HTH myb-type spans 38–92; it reads TITKSRESWTEEEHDKFLEALQLFDRDWKKIEDFVGSKTVIQIRSHAQKYFLKVQ. Residues 65–88 constitute a DNA-binding region (H-T-H motif); it reads WKKIEDFVGSKTVIQIRSHAQKYF. The disordered stretch occupies residues 96 to 123; it reads TLAHVPPPRPKRKAAHPYPQKASKNAQM.

Its subcellular location is the nucleus. Transcriptional activator of evening element (EE)-containing clock-controlled genes. Forms a negative feedback loop with APRR5. Regulates the pattern of histone H3 acetylation of the TOC1 promoter. RVE4, RVE6 and RVE8 are components of the circadian system acting synergistically to regulate flowering time, redundantly to regulate leaf growth, and antagonistically to regulate hypocotyl elongation; their action seems independent of ZTL and HY5. This Arabidopsis thaliana (Mouse-ear cress) protein is Protein REVEILLE 8.